The chain runs to 542 residues: MGDIFLCKKVESPKKNLRESKQREEDDEDPDLIYVGVEHVHRDAEVLFVGMISNSKPVVSNILNRVTPGSNSRRKKGHFRQYPAHVSQPANHVTSMAKAIMPVSLSEGRSTDSPVTMKSSSEPGYKMSSPQVVSPSSSDSLPPGTQCLVGAMVSGGGRNESSPDSKRLSTSDINSRDSKRVKLRDGIPGVPSLAVVPSDMSSTISTNTPSQGICNSSNHVQNGVTFPWPDANGKAHFNLTDPERASESALAMTDISSLASQNKTFDPKKENPIVLLSDFYYGQHKGDGQPEQKTHTTFKCLSCVKVLKNIKFMNHMKHHLEFEKQRNDSWEDHTTCQHCHRQFPTPFQLQCHIDSVHIAMGPSAVCKICELSFETDQVLLQHMKDHHKPGEMPYVCQVCHYRSSVFADVETHFRTCHENTKNLLCLFCLKLFKTAIPYMNHCWRHSRRRVLQCSKCRLQFLTLKEEIEHKTKDHQTFKKPEQLQGLPSETKVIIQTSVQPGSSGMASVIVSNTDPQSSPVKTKKKTAMNTRDSRLPCSKDSS.

The segment at 66–185 (VTPGSNSRRK…RDSKRVKLRD (120 aa)) is disordered. Polar residues predominate over residues 107 to 122 (EGRSTDSPVTMKSSSE). Residues 128 to 143 (SSPQVVSPSSSDSLPP) show a composition bias toward low complexity. Basic and acidic residues predominate over residues 161-185 (SSPDSKRLSTSDINSRDSKRVKLRD). 4 consecutive C2H2-type zinc fingers follow at residues 334-357 (TTCQHCHRQFPTPFQLQCHIDSVH), 364-387 (AVCKICELSFETDQVLLQHMKDHH), 423-445 (LLCLFCLKLFKTAIPYMNHCWRH), and 451-474 (LQCSKCRLQFLTLKEEIEHKTKDH). Positions 499-520 (QPGSSGMASVIVSNTDPQSSPV) are enriched in polar residues. A disordered region spans residues 499–542 (QPGSSGMASVIVSNTDPQSSPVKTKKKTAMNTRDSRLPCSKDSS).

The protein localises to the nucleus. In terms of biological role, may function as a transcription factor. The protein is Zinc finger protein 280A (ZNF280A) of Homo sapiens (Human).